A 122-amino-acid chain; its full sequence is MIQQESRLKVADNTGAKEILCIRVLGGSSRRYAGIGDVIVATVKDAIPGGNVKRGDVVKAVVVRTVKERRRPDGSYIKFDENAAVIIKPDNDPRGTRIFGPVGRELREKRFMKIISLAPEVL.

Belongs to the universal ribosomal protein uL14 family. In terms of assembly, part of the 50S ribosomal subunit. Forms a cluster with proteins L3 and L19. In the 70S ribosome, L14 and L19 interact and together make contacts with the 16S rRNA in bridges B5 and B8.

Binds to 23S rRNA. Forms part of two intersubunit bridges in the 70S ribosome. This chain is Large ribosomal subunit protein uL14, found in Mycobacterium tuberculosis (strain ATCC 25177 / H37Ra).